The following is a 158-amino-acid chain: Ankyrin repeat domain-containing protein 37 (158 aa).

ANK repeat units follow at residues 1–25, 30–59, and 63–92; these read MLLLDCNPEVDGLKHLLETGASVNA, CKQSPVHLAAGSGLACFLLWQLQTGADLNQ, and LGEAPLHKAAKVGSLECLSLLVASDAQIDL. Residues 129–149 carry the Nuclear localization signal motif; the sequence is EHPDRNDCVAVLRQKRSLGSV.

Ubiquitinated by the CRL2(FEM1B) complex, leading to its degradation. As to expression, mainly expressed in testis, small intestine, colon, blood leukocytes and in pancreatic adenocarcinoma cells.

It is found in the nucleus. Its subcellular location is the cytoplasm. The sequence is that of Ankyrin repeat domain-containing protein 37 from Homo sapiens (Human).